A 456-amino-acid polypeptide reads, in one-letter code: Peptide chain release factor PrfB1, chloroplastic (456 aa).

The transit peptide at 1-58 (MSMELTVLGPLAGRSFAIAGKPKLLLLRPTNLPLLRLSLPLSLPNFSSSSRFNSPIVF) directs the protein to the chloroplast.

The protein belongs to the prokaryotic/mitochondrial release factor family. In terms of tissue distribution, expressed in leaves, stems and flowers.

The protein localises to the plastid. It is found in the chloroplast stroma. Directs the termination of translation in response to the peptide chain termination codon UGA. Required for the proper translation, stability and normal processing of UGA-containing polycistronic transcripts in chloroplasts. The chain is Peptide chain release factor PrfB1, chloroplastic from Arabidopsis thaliana (Mouse-ear cress).